A 46-amino-acid polypeptide reads, in one-letter code: Large ribosomal subunit protein bL36 (46 aa).

Belongs to the bacterial ribosomal protein bL36 family.

The protein is Large ribosomal subunit protein bL36 of Escherichia coli O7:K1 (strain IAI39 / ExPEC).